The following is a 205-amino-acid chain: MQAPPSFYEGDTLEVAKKLLGQKLVHIVDGIKRSGIIVEVEAYKGPDDKAAHSYGGRRTDRTEVMFGAPGHAYVYLIYGMYHCFNVITAPVGTPQGVLIRALEPVDGIEEIKLARYNKTDITKAQYKNLTNGPGKLCRALGITLEERGVSLQSDTLHIELVREEEHISSQYKITAGPRINIDYAEEAVHYPWRFYYEGHPFVSKK.

This sequence belongs to the DNA glycosylase MPG family.

This is Putative 3-methyladenine DNA glycosylase from Bacillus cereus (strain ATCC 10987 / NRS 248).